Consider the following 121-residue polypeptide: Large ribosomal subunit protein bL12 (121 aa).

This sequence belongs to the bacterial ribosomal protein bL12 family. In terms of assembly, homodimer. Part of the ribosomal stalk of the 50S ribosomal subunit. Forms a multimeric L10(L12)X complex, where L10 forms an elongated spine to which 2 to 4 L12 dimers bind in a sequential fashion. Binds GTP-bound translation factors.

Forms part of the ribosomal stalk which helps the ribosome interact with GTP-bound translation factors. Is thus essential for accurate translation. The protein is Large ribosomal subunit protein bL12 of Ureaplasma parvum serovar 3 (strain ATCC 27815 / 27 / NCTC 11736).